The primary structure comprises 280 residues: Polyamine aminopropyltransferase 1 (280 aa).

In terms of domain architecture, PABS spans 3-237 (DIVFIERDPY…YWWTFSIASK (235 aa)). Gln-33 provides a ligand contact to S-methyl-5'-thioadenosine. Residues His-64 and Asp-88 each coordinate spermidine. S-methyl-5'-thioadenosine contacts are provided by residues Asp-108 and 139–140 (DG). Residue Asp-157 is the Proton acceptor of the active site. 157 to 160 (DSTD) contributes to the spermidine binding site.

The protein belongs to the spermidine/spermine synthase family. Homodimer or homotetramer.

The protein localises to the cytoplasm. The enzyme catalyses S-adenosyl 3-(methylsulfanyl)propylamine + putrescine = S-methyl-5'-thioadenosine + spermidine + H(+). It functions in the pathway amine and polyamine biosynthesis; spermidine biosynthesis; spermidine from putrescine: step 1/1. Its function is as follows. Catalyzes the irreversible transfer of a propylamine group from the amino donor S-adenosylmethioninamine (decarboxy-AdoMet) to putrescine (1,4-diaminobutane) to yield spermidine. The sequence is that of Polyamine aminopropyltransferase 1 from Aquifex aeolicus (strain VF5).